A 331-amino-acid chain; its full sequence is UPF0324 membrane protein SAR0338 (331 aa).

11 consecutive transmembrane segments (helical) span residues phenylalanine 9–alanine 26, isoleucine 31–tyrosine 48, leucine 69–glycine 88, leucine 93–leucine 115, alanine 122–phenylalanine 144, serine 154–phenylalanine 176, tyrosine 183–glycine 202, leucine 217–methionine 234, isoleucine 247–proline 269, leucine 273–valine 295, and leucine 308–tyrosine 330.

Belongs to the UPF0324 family.

The protein resides in the cell membrane. The polypeptide is UPF0324 membrane protein SAR0338 (Staphylococcus aureus (strain MRSA252)).